A 352-amino-acid polypeptide reads, in one-letter code: UDP-N-acetylglucosamine--N-acetylmuramyl-(pentapeptide) pyrophosphoryl-undecaprenol N-acetylglucosamine transferase (352 aa).

UDP-N-acetyl-alpha-D-glucosamine is bound by residues Ser195 and Gln287.

This sequence belongs to the glycosyltransferase 28 family. MurG subfamily.

It is found in the cell membrane. It carries out the reaction Mur2Ac(oyl-L-Ala-gamma-D-Glu-L-Lys-D-Ala-D-Ala)-di-trans,octa-cis-undecaprenyl diphosphate + UDP-N-acetyl-alpha-D-glucosamine = beta-D-GlcNAc-(1-&gt;4)-Mur2Ac(oyl-L-Ala-gamma-D-Glu-L-Lys-D-Ala-D-Ala)-di-trans,octa-cis-undecaprenyl diphosphate + UDP + H(+). It functions in the pathway cell wall biogenesis; peptidoglycan biosynthesis. Its function is as follows. Cell wall formation. Catalyzes the transfer of a GlcNAc subunit on undecaprenyl-pyrophosphoryl-MurNAc-pentapeptide (lipid intermediate I) to form undecaprenyl-pyrophosphoryl-MurNAc-(pentapeptide)GlcNAc (lipid intermediate II). This is UDP-N-acetylglucosamine--N-acetylmuramyl-(pentapeptide) pyrophosphoryl-undecaprenol N-acetylglucosamine transferase from Streptococcus pneumoniae (strain Taiwan19F-14).